Reading from the N-terminus, the 104-residue chain is Small ribosomal subunit protein uS10 (104 aa).

Belongs to the universal ribosomal protein uS10 family. In terms of assembly, part of the 30S ribosomal subunit.

Its function is as follows. Involved in the binding of tRNA to the ribosomes. This chain is Small ribosomal subunit protein uS10, found in Maricaulis maris (strain MCS10) (Caulobacter maris).